A 395-amino-acid chain; its full sequence is Elongation factor Tu (395 aa).

Residues 10–204 (LPHVNIGTIG…AVDEYIPTPQ (195 aa)) form the tr-type G domain. A G1 region spans residues 19-26 (GHVDHGKT). 19–26 (GHVDHGKT) contacts GTP. A Mg(2+)-binding site is contributed by Thr26. Residues 60–64 (GITIN) are G2. Positions 81–84 (DCPG) are G3. GTP-binding positions include 81–85 (DCPGH) and 136–139 (NKCD). The tract at residues 136 to 139 (NKCD) is G4. The tract at residues 174-176 (SAL) is G5.

Belongs to the TRAFAC class translation factor GTPase superfamily. Classic translation factor GTPase family. EF-Tu/EF-1A subfamily. As to quaternary structure, monomer.

The protein resides in the cytoplasm. It carries out the reaction GTP + H2O = GDP + phosphate + H(+). In terms of biological role, GTP hydrolase that promotes the GTP-dependent binding of aminoacyl-tRNA to the A-site of ribosomes during protein biosynthesis. This is Elongation factor Tu from Mycoplasma capricolum subsp. capricolum (strain California kid / ATCC 27343 / NCTC 10154).